Here is a 151-residue protein sequence, read N- to C-terminus: Ribonuclease H (151 aa).

The region spanning 1-141 (MKHVDIFTDG…ADELARRGME (141 aa)) is the RNase H type-1 domain. The Mg(2+) site is built by Asp9, Glu47, Asp69, and Asp133.

This sequence belongs to the RNase H family. Monomer. The cofactor is Mg(2+).

It is found in the cytoplasm. The catalysed reaction is Endonucleolytic cleavage to 5'-phosphomonoester.. Endonuclease that specifically degrades the RNA of RNA-DNA hybrids. In Rhizobium etli (strain ATCC 51251 / DSM 11541 / JCM 21823 / NBRC 15573 / CFN 42), this protein is Ribonuclease H.